We begin with the raw amino-acid sequence, 122 residues long: MAKKGSISSRNLRISDQIQKDLAEMIQRELRDPRLGLVTLQSVALTPDYAHAKVYFTVLGAEAAEAEAILNEKAGYLHSLLYKRLHIHTVPTLRFFHDTSVEHAIEMSKLINEANATRSKDD.

Belongs to the RbfA family. In terms of assembly, monomer. Binds 30S ribosomal subunits, but not 50S ribosomal subunits or 70S ribosomes.

It localises to the cytoplasm. In terms of biological role, one of several proteins that assist in the late maturation steps of the functional core of the 30S ribosomal subunit. Associates with free 30S ribosomal subunits (but not with 30S subunits that are part of 70S ribosomes or polysomes). Required for efficient processing of 16S rRNA. May interact with the 5'-terminal helix region of 16S rRNA. The sequence is that of Ribosome-binding factor A from Cupriavidus necator (strain ATCC 17699 / DSM 428 / KCTC 22496 / NCIMB 10442 / H16 / Stanier 337) (Ralstonia eutropha).